The following is a 224-amino-acid chain: PKHD-type hydroxylase CYB_2270 (224 aa).

Residues Leu-78–Ser-176 enclose the Fe2OG dioxygenase domain. Fe cation contacts are provided by His-96, Asp-98, and His-157. 2-oxoglutarate is bound at residue Arg-167.

Requires Fe(2+) as cofactor. It depends on L-ascorbate as a cofactor.

The sequence is that of PKHD-type hydroxylase CYB_2270 from Synechococcus sp. (strain JA-2-3B'a(2-13)) (Cyanobacteria bacterium Yellowstone B-Prime).